Consider the following 282-residue polypeptide: Bis(5'-nucleosyl)-tetraphosphatase, symmetrical (282 aa).

It belongs to the Ap4A hydrolase family.

It carries out the reaction P(1),P(4)-bis(5'-adenosyl) tetraphosphate + H2O = 2 ADP + 2 H(+). Hydrolyzes diadenosine 5',5'''-P1,P4-tetraphosphate to yield ADP. This Burkholderia pseudomallei (strain 668) protein is Bis(5'-nucleosyl)-tetraphosphatase, symmetrical.